A 227-amino-acid polypeptide reads, in one-letter code: PKHD-type hydroxylase Pden_4677 (227 aa).

Positions 78 to 178 (HILPPMFNRY…RWASFFWAQS (101 aa)) constitute a Fe2OG dioxygenase domain. Fe cation contacts are provided by His96, Asp98, and His159. Residue Arg169 participates in 2-oxoglutarate binding.

It depends on Fe(2+) as a cofactor. The cofactor is L-ascorbate.

This Paracoccus denitrificans (strain Pd 1222) protein is PKHD-type hydroxylase Pden_4677.